Consider the following 34-residue polypeptide: DDCLGIFKSCNPDNDKCCESYKCSRRDKWCKYVL.

Disulfide bonds link Cys3–Cys18, Cys10–Cys23, and Cys17–Cys30.

Belongs to the neurotoxin 10 (Hwtx-1) family. 14 (Hntx-1) subfamily. In terms of tissue distribution, expressed by the venom gland.

The protein resides in the secreted. In terms of biological role, voltage-gated sodium channel Nav1.7/SCN9A inhibitor. This is Mu-theraphotoxin-CCy1a from Chromatopelma cyaneopubescens (Greenbottle blue tarantula).